The following is a 555-amino-acid chain: Probable metabolite transport protein YDR387C (555 aa).

The Cytoplasmic segment spans residues M1–T39. Residues S40–I60 traverse the membrane as a helical segment. At S61–E83 the chain is on the extracellular side. The chain crosses the membrane as a helical span at residues L84–A104. The Cytoplasmic portion of the chain corresponds to D105–S118. A helical membrane pass occupies residues I119–G139. A topological domain (extracellular) is located at residue R140. The chain crosses the membrane as a helical span at residues L141–I161. Over S162–G168 the chain is Cytoplasmic. The helical transmembrane segment at F169–A189 threads the bilayer. The Extracellular segment spans residues S190–R200. The chain crosses the membrane as a helical span at residues Y201–P221. At E222–M356 the chain is on the cytoplasmic side. Positions S289–T313 are disordered. The chain crosses the membrane as a helical span at residues L357–F377. Residues S378–N384 are Extracellular-facing. Residues P385–Y405 form a helical membrane-spanning segment. Topologically, residues T406–R413 are cytoplasmic. A helical transmembrane segment spans residues A414–F434. Topologically, residues G435–N440 are extracellular. The chain crosses the membrane as a helical span at residues L441–P461. Residues W462–S474 are Cytoplasmic-facing. The helical transmembrane segment at F475–S497 threads the bilayer. Over T498 to N506 the chain is Extracellular. A helical membrane pass occupies residues T507–P527. At E528–H555 the chain is on the cytoplasmic side.

This sequence belongs to the major facilitator superfamily. Sugar transporter (TC 2.A.1.1) family.

The protein resides in the membrane. In Saccharomyces cerevisiae (strain ATCC 204508 / S288c) (Baker's yeast), this protein is Probable metabolite transport protein YDR387C.